We begin with the raw amino-acid sequence, 130 residues long: Small ribosomal subunit protein uS9 (130 aa).

Residues 110–130 are disordered; the sequence is AKERKKYGRKGARARFQFSKR. Basic residues predominate over residues 111-130; the sequence is KERKKYGRKGARARFQFSKR.

It belongs to the universal ribosomal protein uS9 family.

The polypeptide is Small ribosomal subunit protein uS9 (Syntrophotalea carbinolica (strain DSM 2380 / NBRC 103641 / GraBd1) (Pelobacter carbinolicus)).